The chain runs to 100 residues: Large ribosomal subunit protein uL23 (100 aa).

Belongs to the universal ribosomal protein uL23 family. Part of the 50S ribosomal subunit. Contacts protein L29, and trigger factor when it is bound to the ribosome.

Its function is as follows. One of the early assembly proteins it binds 23S rRNA. One of the proteins that surrounds the polypeptide exit tunnel on the outside of the ribosome. Forms the main docking site for trigger factor binding to the ribosome. The polypeptide is Large ribosomal subunit protein uL23 (Shewanella amazonensis (strain ATCC BAA-1098 / SB2B)).